Reading from the N-terminus, the 57-residue chain is uncharacterized protein (57 aa).

A helical membrane pass occupies residues 34-54; sequence AALLDAAALVVIPGLLTAAAV.

It is found in the membrane. This is an uncharacterized protein from Dictyostelium discoideum (Social amoeba).